Consider the following 310-residue polypeptide: Alpha/beta hydrolase domain-containing protein 17A (310 aa).

Active-site charge relay system residues include S190, D255, and H284. S307 carries the phosphoserine modification.

It belongs to the AB hydrolase superfamily. ABHD17 family. Post-translationally, palmitoylated on cysteine residues located in a cysteine cluster at the N-terminus which promotes membrane localization. Palmitoylation is required for post-synaptic localization and for depalmitoylating activity towards DLG4/PSD95.

It is found in the cell membrane. The protein localises to the endosome membrane. It localises to the cell projection. Its subcellular location is the dendritic spine. The protein resides in the postsynaptic density membrane. It catalyses the reaction S-hexadecanoyl-L-cysteinyl-[protein] + H2O = L-cysteinyl-[protein] + hexadecanoate + H(+). In terms of biological role, hydrolyzes fatty acids from S-acylated cysteine residues in proteins. Has depalmitoylating activity towards NRAS. Has depalmitoylating activity towards DLG4/PSD95. May have depalmitoylating activity towards MAP6. This chain is Alpha/beta hydrolase domain-containing protein 17A, found in Bos taurus (Bovine).